A 294-amino-acid polypeptide reads, in one-letter code: MRALRAGLTLALGAGLGAAAEHWRRREGKAPGLLGRVPLLPVVAADLPALPGGPAGGTGELAKYGLPGVAQLRSRESYVLSYDPRTRGALWVLEQLRPERLRGDGDRSACDFREDDSVHAYHRATNADYRGSGFDRGHLAAAANHRWSQRAMDDTFYLSNVAPQVPHLNQNAWNNLERYSRSLTRTYQNVYVCTGPLFLPRTEADGKSYVKYQVIGKNHVAVPTHFFKVLILEAAGGQIELRSYVMPNAPVDETIPLERFLVPIESIERASGLLFVPNILARAGNLKAITAGSK.

The N-terminal 44 residues, 1-44 (MRALRAGLTLALGAGLGAAAEHWRRREGKAPGLLGRVPLLPVVA), are a transit peptide targeting the mitochondrion. At threonine 125 the chain carries Phosphothreonine. Histidine 138 acts as the Proton acceptor in catalysis. Mg(2+) is bound at residue asparagine 169. Residues 283–293 (AGNLKAITAGS) form an essential for deoxyribonuclease activity region.

Belongs to the DNA/RNA non-specific endonuclease family. In terms of assembly, homodimer; disulfide-linked. Homodimerization is essential for its activity. Interacts with YWHAG. Mg(2+) serves as cofactor. Post-translationally, GSK3-beta-mediated phosphorylation at Thr-125 is necessary for its interaction with YWHAG and the induction of autophagy.

It is found in the mitochondrion. Its function is as follows. Endonuclease that preferentially catalyzes the cleavage of double-stranded 5-hydroxymethylcytosine (5hmC)-modified DNA. The 5hmC-modified nucleotide does not increase the binding affinity, but instead increases the efficiency of cutting and specifies the site of cleavage for the modified DNAs. Shows significantly higher affinity for four-stranded Holliday junction over duplex and single-stranded DNAs. Promotes conservative recombination when the DNA is 5hmC-modified. Promotes autophagy through the suppression of mTOR by its phosphorylation-mediated interaction with YWHAG and its endonuclease activity-mediated DNA damage response. GSK3-beta mediated phosphorylation of ENDOG enhances its interaction with YWHAG, leading to the release of TSC2 and PIK3C3 from YWHAG resulting in mTOR pathway suppression and autophagy initiation. Promotes cleavage of mtDNA in response to oxidative and nitrosative stress, in turn inducing compensatory mtDNA replication. This is Endonuclease G, mitochondrial (Endog) from Mus musculus (Mouse).